The chain runs to 271 residues: Catechol O-methyltransferase (271 aa).

Topologically, residues 1–6 are cytoplasmic; sequence MPEAPP. The helical; Signal-anchor for type II membrane protein transmembrane segment at 7 to 26 threads the bilayer; it reads LLLAAVLLGLVLLVVLLLLL. Over 27-271 the chain is Extracellular; sequence RHWGWGLCLI…YKGPGSEAGP (245 aa). Residues V92, E114, S122, E140, I141, 167 to 170, S169, and D191 each bind S-adenosyl-L-methionine; that span reads GASQ. D191 is a Mg(2+) binding site. K194 serves as a coordination point for substrate. Positions 219 and 220 each coordinate Mg(2+). Substrate-binding residues include N220 and E249. At S267 the chain carries Phosphoserine.

This sequence belongs to the class I-like SAM-binding methyltransferase superfamily. Cation-dependent O-methyltransferase family. It depends on Mg(2+) as a cofactor. The N-terminus is blocked. As to expression, brain, liver, placenta, lymphocytes and erythrocytes.

It is found in the cytoplasm. It localises to the cell membrane. It catalyses the reaction a catechol + S-adenosyl-L-methionine = a guaiacol + S-adenosyl-L-homocysteine + H(+). The enzyme catalyses 2-hydroxyestrone + S-adenosyl-L-methionine = 2-hydroxy-3-methoxy-estrone + S-adenosyl-L-homocysteine + H(+). The catalysed reaction is 4-hydroxyestrone + S-adenosyl-L-methionine = 4-methoxyestrone + S-adenosyl-L-homocysteine + H(+). It carries out the reaction 2-hydroxyestrone + S-adenosyl-L-methionine = 2-methoxyestrone + S-adenosyl-L-homocysteine + H(+). It catalyses the reaction 4-hydroxy-17beta-estradiol + S-adenosyl-L-methionine = 4-methoxy-17beta-estradiol + S-adenosyl-L-homocysteine + H(+). The enzyme catalyses 2-hydroxy-17beta-estradiol + S-adenosyl-L-methionine = 2-hydroxy-3-methoxy-17beta-estradiol + S-adenosyl-L-homocysteine + H(+). The catalysed reaction is 2-hydroxy-17beta-estradiol + S-adenosyl-L-methionine = 2-methoxy-17beta-estradiol + S-adenosyl-L-homocysteine + H(+). In terms of biological role, catalyzes the O-methylation, and thereby the inactivation, of catecholamine neurotransmitters and catechol hormones. Also shortens the biological half-lives of certain neuroactive drugs, like L-DOPA, alpha-methyl DOPA and isoproterenol. This chain is Catechol O-methyltransferase, found in Homo sapiens (Human).